A 407-amino-acid polypeptide reads, in one-letter code: MNLVERFLKYVSFDTQSDELTRLTPSTPGQMVFAEYLKSELESLGLEDITLDENGYLFATLPANTEKELPVIGFIAHMDTSPDMSGKNVTPRIVEKYDGSDIVLCAEENIVLSPSQFPELLDHKGEDLIVTNGKTLLGADDKAGIAEIVSAVVYLQEHPEIKHGKIRIGFNPDEEIGEGAHKFDVQKFGCEWAYTMDGGEVGELEFENFNAAAAKITFKGRNVHPGYAKHKMINSIRIANQFITMLPRHETPEHTSGYEGFYHLIGIQGDVEQSTVSYIIRDHDRNKFEDRKKEIEHLVNKINAEFGEGTATLELRDQYYNMREKIEPVMHIIDTAFAAMEAVGVKPNVKPIRGGTDGAQLSFKGLPCPNIFAGGLNFHGRYEFVPIQNMEKAMKVIVKIAELVASK.

Zn(2+) is bound at residue His77. Residue Asp79 is part of the active site. A Zn(2+)-binding site is contributed by Asp140. The active-site Proton acceptor is Glu174. Residues Glu175, Asp197, and His379 each coordinate Zn(2+).

The protein belongs to the peptidase M20B family. Requires Zn(2+) as cofactor.

It localises to the cytoplasm. It catalyses the reaction Release of the N-terminal residue from a tripeptide.. Functionally, cleaves the N-terminal amino acid of tripeptides. In Bacteroides fragilis (strain YCH46), this protein is Peptidase T.